The primary structure comprises 488 residues: 3-octaprenyl-4-hydroxybenzoate carboxy-lyase (488 aa).

Asn-172 provides a ligand contact to Mn(2+). Prenylated FMN contacts are provided by residues 175–177 (IYR), 189–191 (RWL), and 194–195 (RG). Residue Glu-238 participates in Mn(2+) binding. Asp-287 acts as the Proton donor in catalysis.

This sequence belongs to the UbiD family. Homohexamer. Prenylated FMN is required as a cofactor. Requires Mn(2+) as cofactor.

Its subcellular location is the cell membrane. The catalysed reaction is a 4-hydroxy-3-(all-trans-polyprenyl)benzoate + H(+) = a 2-(all-trans-polyprenyl)phenol + CO2. It participates in cofactor biosynthesis; ubiquinone biosynthesis. Catalyzes the decarboxylation of 3-octaprenyl-4-hydroxy benzoate to 2-octaprenylphenol, an intermediate step in ubiquinone biosynthesis. The polypeptide is 3-octaprenyl-4-hydroxybenzoate carboxy-lyase (Pseudomonas syringae pv. syringae (strain B728a)).